The chain runs to 91 residues: MQPRVLLAVTLLALLVSARAEEIQESSLLGVMKDYMQQASKTANEMLTKVQESQVAENAREWMTESLDSMKGYWTSLIGRLSGFLDSTPSS.

A signal peptide spans Met-1–Ala-20. Position 63 is a methionine sulfoxide (Met-63). Residues Asp-68 to Ser-91 are lipid-binding.

The protein belongs to the apolipoprotein C3 family.

It is found in the secreted. Component of triglyceride-rich very low density lipoproteins (VLDL) and high density lipoproteins (HDL) in plasma. Plays a multifaceted role in triglyceride homeostasis. Intracellularly, promotes hepatic very low density lipoprotein 1 (VLDL1) assembly and secretion; extracellularly, attenuates hydrolysis and clearance of triglyceride-rich lipoproteins (TRLs). Impairs the lipolysis of TRLs by inhibiting lipoprotein lipase and the hepatic uptake of TRLs by remnant receptors. Formed of several curved helices connected via semiflexible hinges, so that it can wrap tightly around the curved micelle surface and easily adapt to the different diameters of its natural binding partners. The polypeptide is Apolipoprotein C-III (APOC3) (Cavia porcellus (Guinea pig)).